Consider the following 193-residue polypeptide: dTTP/UTP pyrophosphatase (193 aa).

The active-site Proton acceptor is the D75.

The protein belongs to the Maf family. YhdE subfamily. A divalent metal cation serves as cofactor.

The protein resides in the cytoplasm. It carries out the reaction dTTP + H2O = dTMP + diphosphate + H(+). It catalyses the reaction UTP + H2O = UMP + diphosphate + H(+). Functionally, nucleoside triphosphate pyrophosphatase that hydrolyzes dTTP and UTP. May have a dual role in cell division arrest and in preventing the incorporation of modified nucleotides into cellular nucleic acids. This Koribacter versatilis (strain Ellin345) protein is dTTP/UTP pyrophosphatase.